The chain runs to 348 residues: Phosphoribosylformylglycinamidine cyclo-ligase (348 aa).

It belongs to the AIR synthase family.

It localises to the cytoplasm. It carries out the reaction 2-formamido-N(1)-(5-O-phospho-beta-D-ribosyl)acetamidine + ATP = 5-amino-1-(5-phospho-beta-D-ribosyl)imidazole + ADP + phosphate + H(+). The protein operates within purine metabolism; IMP biosynthesis via de novo pathway; 5-amino-1-(5-phospho-D-ribosyl)imidazole from N(2)-formyl-N(1)-(5-phospho-D-ribosyl)glycinamide: step 2/2. The protein is Phosphoribosylformylglycinamidine cyclo-ligase of Geotalea daltonii (strain DSM 22248 / JCM 15807 / FRC-32) (Geobacter daltonii).